The sequence spans 241 residues: 1-(5-phosphoribosyl)-5-[(5-phosphoribosylamino)methylideneamino] imidazole-4-carboxamide isomerase (241 aa).

Asp-8 serves as the catalytic Proton acceptor. The Proton donor role is filled by Asp-129.

This sequence belongs to the HisA/HisF family.

The protein resides in the cytoplasm. The catalysed reaction is 1-(5-phospho-beta-D-ribosyl)-5-[(5-phospho-beta-D-ribosylamino)methylideneamino]imidazole-4-carboxamide = 5-[(5-phospho-1-deoxy-D-ribulos-1-ylimino)methylamino]-1-(5-phospho-beta-D-ribosyl)imidazole-4-carboxamide. Its pathway is amino-acid biosynthesis; L-histidine biosynthesis; L-histidine from 5-phospho-alpha-D-ribose 1-diphosphate: step 4/9. This Chloroflexus aggregans (strain MD-66 / DSM 9485) protein is 1-(5-phosphoribosyl)-5-[(5-phosphoribosylamino)methylideneamino] imidazole-4-carboxamide isomerase.